Consider the following 802-residue polypeptide: uncharacterized protein (802 aa).

The EF-hand 1 domain maps to 6–41 (SRSEKVKRIFQQFDGNLDGGLSREEMSALVVAVNPR). TPR repeat units lie at residues 229 to 262 (FDGHMAIGKVLYEHQLFKEALVSFKRACELQPTD), 264 to 296 (RPHFKAGNCLYVLGKYKESKDEFLLALEAAESG), 305 to 338 (PQIYVNLGISLEGEGMVLSACEYYREAAILCPTH), 339 to 372 (YRALKLLGSALFGVGEYRAAVKALEEAIYLKPDY), 373 to 406 (ADAHCDLASSLHAMGEDERAIEVFQRAIDLKPGH), 407 to 440 (VDALYNLGGLYMDLGRFQRASEMYTRVLAVWPNH), and 442 to 474 (RAQLNKAVSLLGAGETEEAKRALKEALKMTNRV). The EF-hand 2 domain occupies 595–630 (AIKAINEKILSVLDDSGSGRVDLGMFYAVIAPLCGG).

This is an uncharacterized protein from Arabidopsis thaliana (Mouse-ear cress).